A 509-amino-acid chain; its full sequence is Sperm-associated antigen 6 (509 aa).

ARM repeat units lie at residues 31–70, 73–112, 115–154, 157–196, 199–238, 241–280, 325–365, and 368–409; these read PQNI…RLAN, DDLA…AVGK, PQLA…YIAR, AELS…DIAK, PELA…QVSK, VDLA…EIAK, ENLA…QIGR, and PEHA…NILQ.

As to quaternary structure, interacts with SPAG16 and SPAG17. In terms of tissue distribution, highly expressed in testis.

It is found in the cytoplasm. The protein localises to the cytoskeleton. Its subcellular location is the cell projection. It localises to the cilium. The protein resides in the flagellum. It is found in the cilium axoneme. Its function is as follows. Important for structural integrity of the central apparatus in the sperm tail and for flagellar motility. This Homo sapiens (Human) protein is Sperm-associated antigen 6 (SPAG6).